The following is a 1342-amino-acid chain: ATP-dependent RNA helicase TDRD9 (1342 aa).

The span at 31–63 (KAEAEDNATEVRSDKAFSELSSPEKEKSDDGNQ) shows a compositional bias: basic and acidic residues. The interval 31–81 (KAEAEDNATEVRSDKAFSELSSPEKEKSDDGNQRRKRAQLPTGPGTSPPSL) is disordered. In terms of domain architecture, Helicase ATP-binding spans 99 to 265 (VSLIENNSVV…FGSPIRNQMN (167 aa)). 112–119 (GATGSGKT) is an ATP binding site. Positions 211–214 (DEVH) match the DEAH box motif. Positions 317-503 (SLIQSFDEME…LLKVKLLDMG (187 aa)) constitute a Helicase C-terminal domain. The region spanning 901-962 (SLYPNLLCVA…RELPSDLMTP (62 aa)) is the Tudor domain.

The protein belongs to the DEAD box helicase family. DEAH subfamily.

It is found in the cytoplasm. The protein resides in the nucleus. The catalysed reaction is ATP + H2O = ADP + phosphate + H(+). Its function is as follows. ATP-binding RNA helicase which plays a central role during spermatogenesis by repressing transposable elements and preventing their mobilization, which is essential for the germline integrity. Acts via the piRNA metabolic process, which mediates the repression of transposable elements during meiosis by forming complexes composed of piRNAs and Piwi proteins and governs the methylation and subsequent repression of transposons. Acts downstream of piRNA biogenesis: exclusively required for transposon silencing in the nucleus, suggesting that it acts as a nuclear effector in the nucleus together with piwil4. This Danio rerio (Zebrafish) protein is ATP-dependent RNA helicase TDRD9.